Here is a 150-residue protein sequence, read N- to C-terminus: UPF0178 protein PC1_0756 (150 aa).

It belongs to the UPF0178 family.

The polypeptide is UPF0178 protein PC1_0756 (Pectobacterium carotovorum subsp. carotovorum (strain PC1)).